Consider the following 543-residue polypeptide: Excitatory amino acid transporter 1 (543 aa).

Over 1–47 (MTKSNGEDPRAGSRMERFQQGVRQRTLLAKKKVQNITKDDVKGFLKR) the chain is Cytoplasmic. Residues 48 to 68 (NGFVLFTVIAVVVGSILGFSV) traverse the membrane as a helical segment. Over 69–86 (RSYHMTFRELKYFSFPGE) the chain is Extracellular. A helical transmembrane segment spans residues 87–108 (LLMRMLQMLVLPLIVSSLVTGM). Topologically, residues 109-122 (AALDSKASGKMGLR) are cytoplasmic. The helical transmembrane segment at 123–145 (AVVYYMTTTVIAVFIGIVIVIIV) threads the bilayer. The Extracellular segment spans residues 146-237 (HPGKGTKEHM…MREEMIPVPG (92 aa)). N-linked (GlcNAc...) asparagine glycosylation is found at N206 and N217. The helical transmembrane segment at 238 to 261 (AVNGVNALGLVVFSMCFGLVIGNM) threads the bilayer. Topologically, residues 262-270 (KEQGKALKD) are cytoplasmic. Residues 271 to 298 (FFDSLNEAIMRLVAVIMWYAPIGILFLI) traverse the membrane as a helical segment. Residues 299–319 (AGKIAEMEDMGVVGGQLGMYT) lie on the Extracellular side of the membrane. Residues 320 to 341 (VTVIIGLLIHAVIVLPLLYFAV) traverse the membrane as a helical segment. The Cytoplasmic portion of the chain corresponds to 342–346 (TRKNP). Positions 347 to 377 (WVFIGGILQALITALGTSSSSATLPITFKCL) form an intramembrane region, discontinuously helical. 364–366 (SSS) lines the L-aspartate pocket. Topologically, residues 378-386 (EENNKVDKR) are cytoplasmic. A helical transmembrane segment spans residues 387–413 (VTRFVLPVGATINMDGTALYEALAAIF). 3 residues coordinate Na(+): G395, T397, and N399. T403 is a binding site for L-aspartate. The Extracellular portion of the chain corresponds to 414–426 (IAQVNNYDLNFGQ). The discontinuously helical intramembrane region spans 427-460 (ILTISITATAASIGAAGIPQAGLVTMVIVLTSVG). 444-448 (IPQAG) contributes to the L-aspartate binding site. The Extracellular segment spans residues 461 to 473 (LPTDDITLIIAVD). A helical membrane pass occupies residues 474–495 (WFLDRLRTTTNVLGDSLGAGIV). Positions 477 and 484 each coordinate L-aspartate. Residues N484 and D488 each contribute to the Na(+) site. Topologically, residues 496–543 (EHLSRHELQSGDAEMGNSVIEENEMKKPYQLVSQENELEKPIDSETKM) are cytoplasmic. The interval 521 to 543 (KKPYQLVSQENELEKPIDSETKM) is disordered. Residues 532–543 (ELEKPIDSETKM) show a composition bias toward basic and acidic residues.

This sequence belongs to the dicarboxylate/amino acid:cation symporter (DAACS) (TC 2.A.23) family. Homotrimer. In terms of tissue distribution, detected in retina (at protein level).

It localises to the cell membrane. The catalysed reaction is K(+)(in) + L-glutamate(out) + 3 Na(+)(out) + H(+)(out) = K(+)(out) + L-glutamate(in) + 3 Na(+)(in) + H(+)(in). It carries out the reaction K(+)(in) + L-aspartate(out) + 3 Na(+)(out) + H(+)(out) = K(+)(out) + L-aspartate(in) + 3 Na(+)(in) + H(+)(in). It catalyses the reaction D-aspartate(out) + K(+)(in) + 3 Na(+)(out) + H(+)(out) = D-aspartate(in) + K(+)(out) + 3 Na(+)(in) + H(+)(in). In terms of biological role, sodium-dependent, high-affinity amino acid transporter that mediates the uptake of L-glutamate and also L-aspartate and D-aspartate. Functions as a symporter that transports one amino acid molecule together with two or three Na(+) ions and one proton, in parallel with the counter-transport of one K(+) ion. Plays a redundant role in the rapid removal of released glutamate from the synaptic cleft, which is essential for terminating the postsynaptic action of glutamate. The protein is Excitatory amino acid transporter 1 (SLC1A3) of Ambystoma tigrinum (Eastern tiger salamander).